We begin with the raw amino-acid sequence, 342 residues long: Photosystem II D2 protein (342 aa).

Residues 1 to 29 (ERGWFDILDDWLKRDRFVFVGWSGILLFP) are Cytoplasmic-facing. The helical transmembrane segment at 30–50 (CAYLALGGWLTGTTFVTSWYT) threads the bilayer. Topologically, residues 51 to 113 (HGLASSYLEG…IALHGAFGLI (63 aa)) are lumenal. A chlorophyll a-binding site is contributed by H107. Residues 114 to 130 (GFMLRQFEIARLVGVRP) traverse the membrane as a helical segment. 2 residues coordinate pheophytin a: Q119 and N132. Over 131-141 (YNAIAFSAPIA) the chain is Cytoplasmic. Residues 142–155 (VFVSVFLIYPLGQS) form a helical membrane-spanning segment. Residues 156 to 196 (SWFFAPSFGVAAIFRFLLFFQGFHNWTLNPFHMMGVAGVLG) are Lumenal-facing. Chlorophyll a is bound at residue H187. Residues 197-217 (GALLCAIHGATVENTLFQDGE) traverse the membrane as a helical segment. Residues H204 and F251 each contribute to the a plastoquinone site. H204 contributes to the Fe cation binding site. Residues 218 to 267 (GASTFRAFNPTQAEETYSMVTANRFWSQIFGIAFSNKRWLHFFMLFVPVT) are Cytoplasmic-facing. H258 provides a ligand contact to Fe cation. A helical membrane pass occupies residues 268–284 (GLWMSAIGVVGLALNLR). Residues 285-342 (SYDFISQEIRAAEDPEFETFYTKNLLLNEGIRAWMAPQDQPHENFVFPEEVLPRGNAL) are Lumenal-facing.

The protein belongs to the reaction center PufL/M/PsbA/D family. As to quaternary structure, PSII is composed of 1 copy each of membrane proteins PsbA, PsbB, PsbC, PsbD, PsbE, PsbF, PsbH, PsbI, PsbJ, PsbK, PsbL, PsbM, PsbT, PsbX, PsbY, PsbZ, Psb30/Ycf12, peripheral proteins PsbO, CyanoQ (PsbQ), PsbU, PsbV and a large number of cofactors. It forms dimeric complexes. Requires The D1/D2 heterodimer binds P680, chlorophylls that are the primary electron donor of PSII, and subsequent electron acceptors. It shares a non-heme iron and each subunit binds pheophytin, quinone, additional chlorophylls, carotenoids and lipids. There is also a Cl(-1) ion associated with D1 and D2, which is required for oxygen evolution. The PSII complex binds additional chlorophylls, carotenoids and specific lipids. as cofactor.

The protein resides in the cellular thylakoid membrane. It catalyses the reaction 2 a plastoquinone + 4 hnu + 2 H2O = 2 a plastoquinol + O2. In terms of biological role, photosystem II (PSII) is a light-driven water:plastoquinone oxidoreductase that uses light energy to abstract electrons from H(2)O, generating O(2) and a proton gradient subsequently used for ATP formation. It consists of a core antenna complex that captures photons, and an electron transfer chain that converts photonic excitation into a charge separation. The D1/D2 (PsbA/PsbD) reaction center heterodimer binds P680, the primary electron donor of PSII as well as several subsequent electron acceptors. D2 is needed for assembly of a stable PSII complex. The protein is Photosystem II D2 protein of Thermostichus vulcanus (Synechococcus vulcanus).